We begin with the raw amino-acid sequence, 320 residues long: Beta-sarcoglycan (320 aa).

Residues 1–10 (MAAAAAAAAA) are compositionally biased toward low complexity. Positions 1 to 34 (MAAAAAAAAATEQQGSNGPVKKSMREKAVERRNV) are disordered. The Cytoplasmic segment spans residues 1–67 (MAAAAAAAAA…GLRGRKGNLA (67 aa)). Residues 23–34 (SMREKAVERRNV) show a composition bias toward basic and acidic residues. Residues 68–88 (ICVIVLLFILAVINLLITLVI) form a helical; Signal-anchor for type II membrane protein membrane-spanning segment. The Extracellular portion of the chain corresponds to 89 to 320 (WAVIRIGPNG…VSDNPCGNTH (232 aa)). N-linked (GlcNAc...) asparagine glycans are attached at residues Asn-160, Asn-213, and Asn-260. Intrachain disulfides connect Cys-290–Cys-316 and Cys-292–Cys-309.

This sequence belongs to the sarcoglycan beta/delta/gamma/zeta family. In terms of assembly, cross-link to form 2 major subcomplexes: one consisting of SGCB, SGCD and SGCG and the other consisting of SGCB and SGCD. The association between SGCB and SGCG is particularly strong while SGCA is loosely associated with the other sarcoglycans. In terms of processing, disulfide bonds are present. As to expression, most strongly expressed in skeletal and heart muscle. Also detected in proliferating myoblasts.

Its subcellular location is the cell membrane. It localises to the sarcolemma. It is found in the cytoplasm. The protein localises to the cytoskeleton. Component of the sarcoglycan complex, a subcomplex of the dystrophin-glycoprotein complex which forms a link between the F-actin cytoskeleton and the extracellular matrix. This Mus musculus (Mouse) protein is Beta-sarcoglycan (Sgcb).